A 362-amino-acid chain; its full sequence is Methylthioribose-1-phosphate isomerase (362 aa).

Residue aspartate 252 is the Proton donor of the active site.

Belongs to the eIF-2B alpha/beta/delta subunits family. MtnA subfamily.

It localises to the cytoplasm. The protein localises to the nucleus. It carries out the reaction 5-(methylsulfanyl)-alpha-D-ribose 1-phosphate = 5-(methylsulfanyl)-D-ribulose 1-phosphate. It participates in amino-acid biosynthesis; L-methionine biosynthesis via salvage pathway; L-methionine from S-methyl-5-thio-alpha-D-ribose 1-phosphate: step 1/6. Its function is as follows. Catalyzes the interconversion of methylthioribose-1-phosphate (MTR-1-P) into methylthioribulose-1-phosphate (MTRu-1-P). This Drosophila mojavensis (Fruit fly) protein is Methylthioribose-1-phosphate isomerase.